Consider the following 268-residue polypeptide: Tryptophan synthase alpha chain (268 aa).

Catalysis depends on proton acceptor residues E49 and D60.

Belongs to the TrpA family. Tetramer of two alpha and two beta chains.

It catalyses the reaction (1S,2R)-1-C-(indol-3-yl)glycerol 3-phosphate + L-serine = D-glyceraldehyde 3-phosphate + L-tryptophan + H2O. Its pathway is amino-acid biosynthesis; L-tryptophan biosynthesis; L-tryptophan from chorismate: step 5/5. The alpha subunit is responsible for the aldol cleavage of indoleglycerol phosphate to indole and glyceraldehyde 3-phosphate. The polypeptide is Tryptophan synthase alpha chain (Vibrio parahaemolyticus serotype O3:K6 (strain RIMD 2210633)).